We begin with the raw amino-acid sequence, 644 residues long: Zinc finger protein 74 (644 aa).

Residues 43–114 (VSFKDVAVDF…QREVPRGPCP (72 aa)) form the KRAB domain. 12 consecutive C2H2-type zinc fingers follow at residues 248–270 (FVCG…RRWH), 276–298 (YKCD…RRIH), 304–326 (FFCG…QRIH), 332–354 (YKCS…LRVH), 360–382 (YRCG…HRIH), 388–410 (YQCG…EKIH), 416–438 (FKCS…QRTH), 444–466 (FKCA…RRIH), 472–494 (FKCN…RRIH), 500–522 (FDCS…QRIH), 528–550 (YKCS…QKIH), and 556–578 (FKCE…QRLH). Lys-582 is covalently cross-linked (Glycyl lysine isopeptide (Lys-Gly) (interchain with G-Cter in SUMO2)).

This sequence belongs to the krueppel C2H2-type zinc-finger protein family. Highly expressed in the fetal brain.

It localises to the nucleus. Functionally, may play a role in RNA metabolism. In Homo sapiens (Human), this protein is Zinc finger protein 74 (ZNF74).